A 135-amino-acid polypeptide reads, in one-letter code: uncharacterized protein (135 aa).

Helical transmembrane passes span 7 to 25 (WSAA…EWTI), 29 to 51 (ILLT…TGNI), 64 to 85 (VFIF…EVGI), and 89 to 108 (ALIF…ISIF).

It belongs to the bacteriophage holin family. Cp-1 holin subfamily.

The protein resides in the cell membrane. This is an uncharacterized protein from Halalkalibacterium halodurans (strain ATCC BAA-125 / DSM 18197 / FERM 7344 / JCM 9153 / C-125) (Bacillus halodurans).